We begin with the raw amino-acid sequence, 64 residues long: Large ribosomal subunit protein bL35 (64 aa).

The interval 1-21 (MPKMKTNRGAAKRFKVKKSGK) is disordered. The span at 10-21 (AAKRFKVKKSGK) shows a compositional bias: basic residues.

It belongs to the bacterial ribosomal protein bL35 family.

The sequence is that of Large ribosomal subunit protein bL35 from Nautilia profundicola (strain ATCC BAA-1463 / DSM 18972 / AmH).